A 196-amino-acid chain; its full sequence is SPRY domain-containing protein 7 (196 aa).

At Ala2 the chain carries N-acetylalanine. The 183-residue stretch at 2–184 (AASVFCCLRC…FSEFYHTPPP (183 aa)) folds into the B30.2/SPRY domain.

This Bos taurus (Bovine) protein is SPRY domain-containing protein 7 (SPRYD7).